Here is a 418-residue protein sequence, read N- to C-terminus: MSKTVHVIGAGISGLAAAIRLARAGLTVHVHEAMQQAGGRCRSYFDAQTGLVIDNGNHLLLSGNHAACEYARTIGTEAGLVGPERAEFDFIDLPANARWRLKLGGGKLPLWLFDANSRVPDTSIGDYLGLMPLLWAPTTKLIGDTINCSGPLYDRLVAPLLLAALNVDPPEGSAGLAGAVVRETLLAGGKACRPLIARDGLSAVLVEPAVAQLAARGPGVQFGHELRALTPAGDRVGALQFGGEDVVTLGPDDAVVLAVPPRPAASLLPGLKTPQEYRAIVNAHFNYAPPPGMPALTGVIGGVVEWLFAFPNRLSVTISNGDRLVDAPREQLAAEIWGEICKIAGISANLPPWQIVRERRATFAATPAQNALRPGPVTQWRNLYLAGDWTDTGLPATIEGSVRSGNRAADLVLAAGRA.

Belongs to the HpnE family.

The enzyme catalyses squalene + FAD + H2O + H(+) = hydroxysqualene + FADH2. Its pathway is secondary metabolite biosynthesis; hopanoid biosynthesis. In terms of biological role, involved in the biosynthesis of the hopanoid precursor squalene (SQ) from farnesyl diphosphate (FPP). Catalyzes the third (last) step, the reduction of hydroxysqualene (HSQ) to SQ. The protein is Hydroxysqualene dehydroxylase of Rhodopseudomonas palustris (strain ATCC BAA-98 / CGA009).